The sequence spans 251 residues: Regulator of G-protein signaling 7-binding protein B (251 aa).

The tract at residues 1 to 43 is disordered; it reads MCSAPNGRKNRPRSAANIFQIGKSSVRDPERRESTESARRAQR. Over residues 25–43 the composition is skewed to basic and acidic residues; sequence SVRDPERRESTESARRAQR. S-palmitoyl cysteine attachment occurs at residues cysteine 246 and cysteine 247.

The protein belongs to the RGS7BP/RGS9BP family. Post-translationally, palmitoylated. Undergoes rapid palmitoylation turnover. Palmitoylation regulates the cell membrane and nuclear shuttling and the regulation of GPCR signaling. Upon depalmitoylation, it is targeted from the plasma membrane into the nucleus. GPCR signaling inhibits depalmitoylation and promotes localization to the plasma membrane.

Its subcellular location is the nucleus. The protein resides in the cytoplasm. It localises to the cell membrane. Regulator of G protein-coupled receptor (GPCR) signaling. Regulatory subunit of the R7-Gbeta5 complexes that acts by controlling the subcellular location of the R7-Gbeta5 complexes. When palmitoylated, it targets the R7-Gbeta5 complexes to the plasma membrane, leading to inhibit G protein alpha subunits. When it is unpalmitoylated, the R7-Gbeta5 complexes undergo a nuclear/cytoplasmic shuttling. This Danio rerio (Zebrafish) protein is Regulator of G-protein signaling 7-binding protein B (rgs7bpb).